The following is a 155-amino-acid chain: Ribosomal RNA large subunit methyltransferase H (155 aa).

S-adenosyl-L-methionine-binding positions include Leu-73, Gly-104, and 123–128; that span reads LSPLTL.

The protein belongs to the RNA methyltransferase RlmH family. In terms of assembly, homodimer.

Its subcellular location is the cytoplasm. The enzyme catalyses pseudouridine(1915) in 23S rRNA + S-adenosyl-L-methionine = N(3)-methylpseudouridine(1915) in 23S rRNA + S-adenosyl-L-homocysteine + H(+). Specifically methylates the pseudouridine at position 1915 (m3Psi1915) in 23S rRNA. This Pseudomonas fluorescens (strain ATCC BAA-477 / NRRL B-23932 / Pf-5) protein is Ribosomal RNA large subunit methyltransferase H.